Consider the following 110-residue polypeptide: Endoribonuclease SymE (110 aa).

One can recognise a SpoVT-AbrB domain in the interval 29 to 74; it reads SRYPDYTRIPALTMKGQWLEAAGFATGTEVDVRVMNGCIVLTAQQP.

This sequence belongs to the SymE family.

Its subcellular location is the cytoplasm. Functionally, involved in the degradation and recycling of damaged RNA. It is itself a target for degradation by the ATP-dependent protease Lon. This Salmonella heidelberg (strain SL476) protein is Endoribonuclease SymE.